Here is a 347-residue protein sequence, read N- to C-terminus: Homocysteine S-methyltransferase 3 (347 aa).

The region spanning leucine 12 to leucine 333 is the Hcy-binding domain. Zn(2+) is bound by residues cysteine 251, cysteine 318, and cysteine 319.

Monomer. The cofactor is Zn(2+). As to expression, expressed predominantly in rosette leaves. Expressed in roots, cauline leaves and developing seeds.

It carries out the reaction S-methyl-L-methionine + L-homocysteine = 2 L-methionine + H(+). In terms of biological role, catalyzes methyl transfer from S-methylmethionine (SMM) to adenosyl-L-homocysteine (AdoMet). SMM degradation (by HMT-1, HMT-2 and HMT-3) and biosynthesis (by MMT1) constitute the SMM cycle in plants, which is probably required to achieve short term control of AdoMet level. This is Homocysteine S-methyltransferase 3 (HMT3) from Arabidopsis thaliana (Mouse-ear cress).